The sequence spans 338 residues: MKVFYDKDADLSLIKGKQVTIIGYGSQGHAHALNLKDSGVNVTVGLRRGGASWSKAENAGLAVKEVAEAVKGADVVMMLLPDEQIAAVYAQEVHANIKEGAALAFAHGFNVHYGQVIPRADLDVIMVAPKAPGHTVRGTYAQGGGVPHLIAVAQDKSGAARDIALSYAAANGGGRAGIIETNFREETETDLFGEQAVLCGGTVELIKAGFETLVEAGYAPEMAYFECLHELKLIVDLIYEGGIANMNYSISNNAEYGEYVTGPRVVTEETKKAMKQCLTDIQTGEYAKSFILENKAGAPTLQSRRRLTAEHQIEQVGSKLRAMMPWIAKNKLVDQSKN.

Residues Met-1–Thr-181 enclose the KARI N-terminal Rossmann domain. Residues Tyr-24–Gln-27, Arg-47, and Ser-52 each bind NADP(+). His-107 is an active-site residue. Position 133 (Gly-133) interacts with NADP(+). Residues Asn-182 to Ile-327 form the KARI C-terminal knotted domain. Positions 190, 194, 226, and 230 each coordinate Mg(2+). Residue Ser-251 coordinates substrate.

The protein belongs to the ketol-acid reductoisomerase family. Mg(2+) serves as cofactor.

The enzyme catalyses (2R)-2,3-dihydroxy-3-methylbutanoate + NADP(+) = (2S)-2-acetolactate + NADPH + H(+). It catalyses the reaction (2R,3R)-2,3-dihydroxy-3-methylpentanoate + NADP(+) = (S)-2-ethyl-2-hydroxy-3-oxobutanoate + NADPH + H(+). Its pathway is amino-acid biosynthesis; L-isoleucine biosynthesis; L-isoleucine from 2-oxobutanoate: step 2/4. The protein operates within amino-acid biosynthesis; L-valine biosynthesis; L-valine from pyruvate: step 2/4. In terms of biological role, involved in the biosynthesis of branched-chain amino acids (BCAA). Catalyzes an alkyl-migration followed by a ketol-acid reduction of (S)-2-acetolactate (S2AL) to yield (R)-2,3-dihydroxy-isovalerate. In the isomerase reaction, S2AL is rearranged via a Mg-dependent methyl migration to produce 3-hydroxy-3-methyl-2-ketobutyrate (HMKB). In the reductase reaction, this 2-ketoacid undergoes a metal-dependent reduction by NADPH to yield (R)-2,3-dihydroxy-isovalerate. This Burkholderia mallei (strain NCTC 10229) protein is Ketol-acid reductoisomerase (NADP(+)).